Here is a 96-residue protein sequence, read N- to C-terminus: Small ribosomal subunit protein bS18 (96 aa).

This sequence belongs to the bacterial ribosomal protein bS18 family. In terms of assembly, part of the 30S ribosomal subunit. Forms a tight heterodimer with protein bS6.

Binds as a heterodimer with protein bS6 to the central domain of the 16S rRNA, where it helps stabilize the platform of the 30S subunit. The chain is Small ribosomal subunit protein bS18 from Borrelia garinii subsp. bavariensis (strain ATCC BAA-2496 / DSM 23469 / PBi) (Borreliella bavariensis).